A 226-amino-acid polypeptide reads, in one-letter code: Ribonuclease 3 (226 aa).

In terms of domain architecture, RNase III spans 6 to 128 (INRLQRKLGY…LIGAIFLDSD (123 aa)). Glu41 is a Mg(2+) binding site. Asp45 is an active-site residue. Mg(2+) is bound by residues Asp114 and Glu117. Residue Glu117 is part of the active site. A DRBM domain is found at 155–225 (DPKTRLQEYL…AEQALKQLEL (71 aa)).

The protein belongs to the ribonuclease III family. In terms of assembly, homodimer. The cofactor is Mg(2+).

The protein resides in the cytoplasm. It catalyses the reaction Endonucleolytic cleavage to 5'-phosphomonoester.. Its function is as follows. Digests double-stranded RNA. Involved in the processing of primary rRNA transcript to yield the immediate precursors to the large and small rRNAs (23S and 16S). Processes some mRNAs, and tRNAs when they are encoded in the rRNA operon. Processes pre-crRNA and tracrRNA of type II CRISPR loci if present in the organism. This Photorhabdus laumondii subsp. laumondii (strain DSM 15139 / CIP 105565 / TT01) (Photorhabdus luminescens subsp. laumondii) protein is Ribonuclease 3.